A 248-amino-acid polypeptide reads, in one-letter code: Probable transcriptional regulatory protein Ecaj_0351 (248 aa).

Residues 1–21 (MAGHSQFANIKHRKGAQDAKR) are disordered.

Belongs to the TACO1 family.

The protein localises to the cytoplasm. The protein is Probable transcriptional regulatory protein Ecaj_0351 of Ehrlichia canis (strain Jake).